Reading from the N-terminus, the 144-residue chain is Gas vesicle protein I1 (144 aa).

A disordered region spans residues 1–144; sequence MSDKQQQKHK…SPTEDEVNDE (144 aa). 2 stretches are compositionally biased toward basic residues: residues 7–17 and 26–46; these read QKHKQKARQAR and KARR…TRNR. Positions 75-94 are enriched in polar residues; the sequence is MPPQKSNAENAVRNSHSTVP. Residues 122–136 show a composition bias toward low complexity; the sequence is SEASAPSDESASGSP.

This sequence belongs to the gas vesicle GvpI family. GvpF to GvpM interact with each other in vitro, and may form multi-subunit complex(es). Interacts with GvpC1 and GvpO.

It is found in the gas vesicle. In terms of biological role, proteins GvpF to GvpM might be involved in nucleating gas vesicle formation. A minor component of the gas vesicle. Gas vesicles are hollow, gas filled proteinaceous nanostructures found in several microbial planktonic microorganisms. They allow positioning of halobacteria at the optimal depth for growth in the poorly aerated, shallow brine pools of their habitat. Expression of a 9.5 kb p-vac DNA fragment containing 2 divergently transcribed regions (gvpD-gvpE-gvpF-gvpG-gvpH-gvpI-gvpJ-gvpK-gvpL-gvpM and gvpA-gvpC-gvpN-gvpO) allows H.volcanii to produce gas vesicles. A similar region restores gas vesicle production in H.halobium without the p-vac locus, but it still has the c-vac locus. The chain is Gas vesicle protein I1 (gvpI11) from Halobacterium salinarum (strain ATCC 700922 / JCM 11081 / NRC-1) (Halobacterium halobium).